A 133-amino-acid polypeptide reads, in one-letter code: MTDKYKERRFDTYGYEKIDKEVLESIEYEYPEKNTIVEYITNEFSSVCPWTGLPDNAKLTIRYIPSKKLVELKSLKYYLTSYRNVGILQEHAINRILDDLVELLQPKFMEIIGEFQERGGIATRIVAKYEKEK.

The active-site Thioimide intermediate is the cysteine 48. Aspartate 55 (proton donor) is an active-site residue. Substrate is bound by residues 70–72 (VEL) and 89–90 (QE).

The protein belongs to the GTP cyclohydrolase I family. QueF type 1 subfamily.

It is found in the cytoplasm. The enzyme catalyses 7-aminomethyl-7-carbaguanine + 2 NADP(+) = 7-cyano-7-deazaguanine + 2 NADPH + 3 H(+). It participates in tRNA modification; tRNA-queuosine biosynthesis. Catalyzes the NADPH-dependent reduction of 7-cyano-7-deazaguanine (preQ0) to 7-aminomethyl-7-deazaguanine (preQ1). The protein is NADPH-dependent 7-cyano-7-deazaguanine reductase of Thermoanaerobacter pseudethanolicus (strain ATCC 33223 / 39E) (Clostridium thermohydrosulfuricum).